The chain runs to 620 residues: Translocator protein BipB (620 aa).

A disordered region spans residues 58-95 (QCDAQPAAHDARLDDRPALRAPQERDAPPLGASDTGSR). The segment covering 66-84 (HDARLDDRPALRAPQERDA) has biased composition (basic and acidic residues). Residues 309–339 (EMQAKREAELQKKSDEYQAQVKKAEEMQKTM) are a coiled coil. 3 helical membrane passes run 355–375 (FAAAAFTGGASLALAAVGLAL), 401–421 (AILKPLMEMISSLITKALVAC), and 430–450 (LAGAILGAVVTGVALVAAAFV).

Belongs to the SctE/SipB/YopB family.

The protein localises to the secreted. It is found in the host membrane. Plays a role in the bacterium-induced formation of multinucleated giant cell (MNGC), which is formed after host cell fusion, as well as in the intercellular spreading of bacteria and in the induction of apoptosis in macrophages. May act in concert with other effector proteins to induce fusion of host cell membranes. This chain is Translocator protein BipB (bipB), found in Burkholderia mallei (strain NCTC 10247).